Reading from the N-terminus, the 632-residue chain is ATP-dependent RNA helicase mrh4, mitochondrial (632 aa).

A mitochondrion-targeting transit peptide spans 1–37; the sequence is MNRLGRMSLPLRSPACLICQTRTTTLIPSSWQTARSM. The interval 49 to 111 is disordered; the sequence is MALSPDVAKP…KEEAQKKESP (63 aa). The segment covering 97–111 has biased composition (basic and acidic residues); that stretch reads RSGDSKEEAQKKESP. Residues 141–174 carry the Q motif motif; that stretch reads TSFDQFPLLPVVRNSIVSQALPGLMEVTPTPIQR. The Helicase ATP-binding domain maps to 194–406; sequence DDDEPHYDQF…RKRYPDIKRL (213 aa). 207–214 provides a ligand contact to ATP; it reads AETGSGKT. The short motif at 353–356 is the DEAD box element; sequence DEAD. The Helicase C-terminal domain maps to 460 to 632; sequence FLEPKTKKIL…EGMFRGQALI (173 aa).

The protein belongs to the DEAD box helicase family. MRH4 subfamily.

The protein resides in the mitochondrion. It carries out the reaction ATP + H2O = ADP + phosphate + H(+). In terms of biological role, ATP-binding RNA helicase involved in mitochondrial RNA metabolism. Required for maintenance of mitochondrial DNA. The sequence is that of ATP-dependent RNA helicase mrh4, mitochondrial (mrh4) from Aspergillus clavatus (strain ATCC 1007 / CBS 513.65 / DSM 816 / NCTC 3887 / NRRL 1 / QM 1276 / 107).